Consider the following 251-residue polypeptide: Triosephosphate isomerase 1 (251 aa).

Substrate is bound at residue 9 to 11; the sequence is NWK. Histidine 95 serves as the catalytic Electrophile. Glutamate 167 (proton acceptor) is an active-site residue. Substrate-binding positions include glycine 173, serine 213, and 234-235; that span reads GG.

Belongs to the triosephosphate isomerase family. As to quaternary structure, homodimer.

Its subcellular location is the cytoplasm. The catalysed reaction is D-glyceraldehyde 3-phosphate = dihydroxyacetone phosphate. The protein operates within carbohydrate biosynthesis; gluconeogenesis. It functions in the pathway carbohydrate degradation; glycolysis; D-glyceraldehyde 3-phosphate from glycerone phosphate: step 1/1. In terms of biological role, involved in the gluconeogenesis. Catalyzes stereospecifically the conversion of dihydroxyacetone phosphate (DHAP) to D-glyceraldehyde-3-phosphate (G3P). The sequence is that of Triosephosphate isomerase 1 from Listeria monocytogenes serovar 1/2a (strain ATCC BAA-679 / EGD-e).